The following is a 430-amino-acid chain: GTPase Obg (430 aa).

The 158-residue stretch at 1–158 folds into the Obg domain; sequence MFVDQVKISL…LEVTLELKLL (158 aa). Residues 118–145 are disordered; the sequence is RGGRGGRGNSRFATPRNPAPDFSENGEP. Residues 159–329 form the OBG-type G domain; it reads ADVGLVGFPS…LLYQIADKLE (171 aa). Residues 165-172, 190-194, 212-215, 282-285, and 310-312 contribute to the GTP site; these read GFPSVGKS, FTTIK, DLPG, NKMD, and STI. Mg(2+) contacts are provided by serine 172 and threonine 192. Positions 352–430 constitute an OCT domain; it reads KHTPSADKFT…ILGGEFEFVE (79 aa).

The protein belongs to the TRAFAC class OBG-HflX-like GTPase superfamily. OBG GTPase family. As to quaternary structure, monomer. Mg(2+) is required as a cofactor.

The protein localises to the cytoplasm. Its function is as follows. An essential GTPase which binds GTP, GDP and possibly (p)ppGpp with moderate affinity, with high nucleotide exchange rates and a fairly low GTP hydrolysis rate. Plays a role in control of the cell cycle, stress response, ribosome biogenesis and in those bacteria that undergo differentiation, in morphogenesis control. This Staphylococcus epidermidis (strain ATCC 35984 / DSM 28319 / BCRC 17069 / CCUG 31568 / BM 3577 / RP62A) protein is GTPase Obg.